The sequence spans 276 residues: N-acyl homoserine lactonase AiiB (276 aa).

The Zn(2+) site is built by H111, H113, H116, H191, D213, and H259.

This sequence belongs to the metallo-beta-lactamase superfamily. The cofactor is Zn(2+).

The catalysed reaction is an N-acyl-L-homoserine lactone + H2O = an N-acyl-L-homoserine + H(+). The polypeptide is N-acyl homoserine lactonase AiiB (Agrobacterium fabrum (strain C58 / ATCC 33970) (Agrobacterium tumefaciens (strain C58))).